The sequence spans 359 residues: Molybdenum import ATP-binding protein ModC (359 aa).

Residues 1-233 (MSGLTVSIRG…IDAESEGGGV (233 aa)) form the ABC transporter domain. Residue 32–39 (GHSGAGKT) coordinates ATP. In terms of domain architecture, Mop spans 289–355 (AISIRNLLPV…VKAVSVDRAA (67 aa)).

Belongs to the ABC transporter superfamily. Molybdate importer (TC 3.A.1.8) family. The complex is composed of two ATP-binding proteins (ModC), two transmembrane proteins (ModB) and a solute-binding protein (ModA).

Its subcellular location is the cell inner membrane. The catalysed reaction is molybdate(out) + ATP + H2O = molybdate(in) + ADP + phosphate + H(+). Its function is as follows. Part of the ABC transporter complex ModABC involved in molybdenum import. Responsible for energy coupling to the transport system. The chain is Molybdenum import ATP-binding protein ModC from Brucella suis biovar 1 (strain 1330).